Here is a 333-residue protein sequence, read N- to C-terminus: HTH-type transcriptional regulator Cphy_2742 (333 aa).

The region spanning 1–55 is the HTH lacI-type domain; sequence MNIYDVSQKAGVSIATVSRVINGNPNVSEKTKQKVLDVMKEIGYTPNVFARGLGL. The H-T-H motif DNA-binding region spans 3–22; that stretch reads IYDVSQKAGVSIATVSRVIN.

The protein localises to the cytoplasm. Its function is as follows. Involved in control of pectin and galacturonic acid metabolism. Probably represses a comprehensive set of pectin fermentation genes by binding a conserved palindrome at or downstream of their transcription start site to block transcription. In the presence of galacturonic acid may activate transcription of acetate synthesis and other aspects of carbon metabolism. This is HTH-type transcriptional regulator Cphy_2742 from Lachnoclostridium phytofermentans (strain ATCC 700394 / DSM 18823 / ISDg) (Clostridium phytofermentans).